A 249-amino-acid chain; its full sequence is Precorrin-4 C(11)-methyltransferase (249 aa).

Belongs to the precorrin methyltransferase family.

It catalyses the reaction precorrin-4 + S-adenosyl-L-methionine = precorrin-5 + S-adenosyl-L-homocysteine. It functions in the pathway cofactor biosynthesis; adenosylcobalamin biosynthesis; cob(II)yrinate a,c-diamide from precorrin-2 (aerobic route): step 4/10. Catalyzes the methylation of C-11 in precorrin-4 to form precorrin-5. The sequence is that of Precorrin-4 C(11)-methyltransferase (cobM) from Rhodococcus erythropolis (Arthrobacter picolinophilus).